The following is a 142-amino-acid chain: Lysosomal enzyme trafficking factor (142 aa).

Transmembrane regions (helical) follow at residues 8–28 and 76–96; these read MGWIGVGLYLLASVAAVYYIF and LLPFWVWATIFLLPYLQVFLF.

This sequence belongs to the LYSET family.

The protein localises to the golgi apparatus membrane. Functionally, required for mannose-6-phosphate-dependent trafficking of lysosomal enzymes. LYSET bridges GlcNAc-1-phosphate transferase (GNPTAB), to the membrane-bound transcription factor site-1 protease (MBTPS1), thus allowing proteolytic activation of the GNPTAB. GNPTAB is involved in the regulation of M6P-dependent Golgi-to-lysosome trafficking of lysosomal enzymes. LYSET is thus an essential factor for maturation and delivery of lysosomal hydrolases. The protein is Lysosomal enzyme trafficking factor (tmem251) of Danio rerio (Zebrafish).